Consider the following 761-residue polypeptide: Mitochondrial intermediate peptidase 1 (761 aa).

His-530 contributes to the Zn(2+) binding site. The active site involves Glu-531. Zn(2+)-binding residues include His-534 and His-537.

It belongs to the peptidase M3 family. Zn(2+) is required as a cofactor.

Its subcellular location is the mitochondrion matrix. It carries out the reaction Release of an N-terminal octapeptide as second stage of processing of some proteins imported into the mitochondrion.. Functionally, cleaves proteins, imported into the mitochondrion, to their mature size. While most mitochondrial precursor proteins are processed to the mature form in one step by mitochondrial processing peptidase (MPP), the sequential cleavage by MIP of an octapeptide after initial processing by MPP is a required step for a subgroup of nuclear-encoded precursor proteins destined for the matrix or the inner membrane. This Cryptococcus neoformans var. neoformans serotype D (strain B-3501A) (Filobasidiella neoformans) protein is Mitochondrial intermediate peptidase 1 (OCT1).